We begin with the raw amino-acid sequence, 349 residues long: Isopentenyl-diphosphate delta-isomerase (349 aa).

6-7 contacts substrate; it reads RK. FMN is bound by residues 62–64, Ser-93, and Asn-122; that span reads AMT. Gln-152 is a substrate binding site. Mg(2+) is bound at residue Glu-153. FMN-binding positions include Lys-184, Thr-214, 258–259, and 280–281; these read GG and AG.

This sequence belongs to the IPP isomerase type 2 family. In terms of assembly, homooctamer. Dimer of tetramers. It depends on FMN as a cofactor. Requires NADPH as cofactor. Mg(2+) is required as a cofactor.

It is found in the cytoplasm. The catalysed reaction is isopentenyl diphosphate = dimethylallyl diphosphate. Its function is as follows. Involved in the biosynthesis of isoprenoids. Catalyzes the 1,3-allylic rearrangement of the homoallylic substrate isopentenyl (IPP) to its allylic isomer, dimethylallyl diphosphate (DMAPP). The protein is Isopentenyl-diphosphate delta-isomerase of Bacillus cytotoxicus (strain DSM 22905 / CIP 110041 / 391-98 / NVH 391-98).